The sequence spans 348 residues: NADH-quinone oxidoreductase subunit H (348 aa).

8 consecutive transmembrane segments (helical) span residues 21-41 (IAGI…VIYV), 87-107 (GIFL…WAVI), 120-140 (VGLL…VMAG), 166-186 (IGFI…SEIV), 195-215 (GIVN…LFFI), 258-278 (NILL…LPPI), 288-308 (GFLW…WIWA), and 325-345 (VFLP…MATG).

This sequence belongs to the complex I subunit 1 family. As to quaternary structure, NDH-1 is composed of 14 different subunits. Subunits NuoA, H, J, K, L, M, N constitute the membrane sector of the complex.

The protein resides in the cell inner membrane. The catalysed reaction is a quinone + NADH + 5 H(+)(in) = a quinol + NAD(+) + 4 H(+)(out). Functionally, NDH-1 shuttles electrons from NADH, via FMN and iron-sulfur (Fe-S) centers, to quinones in the respiratory chain. The immediate electron acceptor for the enzyme in this species is believed to be ubiquinone. Couples the redox reaction to proton translocation (for every two electrons transferred, four hydrogen ions are translocated across the cytoplasmic membrane), and thus conserves the redox energy in a proton gradient. This subunit may bind ubiquinone. In Erythrobacter litoralis (strain HTCC2594), this protein is NADH-quinone oxidoreductase subunit H.